Consider the following 404-residue polypeptide: Subtilisin-like protease 3 (404 aa).

The signal sequence occupies residues 1 to 20 (MLFSKSLVALVACFLPLIVS). Positions 21–114 (ATELKLRNAA…VDKDVKVSAY (94 aa)) are excised as a propeptide. One can recognise an Inhibitor I9 domain in the interval 38–112 (SYIVVYKDID…AYVDKDVKVS (75 aa)). The Peptidase S8 domain maps to 123 to 404 (PWGLDRISHR…DNLAYNDDGY (282 aa)). Residue Asn-133 is glycosylated (N-linked (GlcNAc...) asparagine). Catalysis depends on charge relay system residues Asp-158 and His-190. Asn-243, Asn-251, Asn-286, Asn-307, and Asn-340 each carry an N-linked (GlcNAc...) asparagine glycan. The active-site Charge relay system is the Ser-347. Residue Asn-366 is glycosylated (N-linked (GlcNAc...) asparagine).

Belongs to the peptidase S8 family.

The protein localises to the secreted. In terms of biological role, secreted subtilisin-like serine endopeptidase. Mediates the degradation of collagen, the major structural protein in the mammalian host. Degrades the nonhelical regions of collagen that function in the cross-linking of the helical components. May function as virulence factor involved in epidermal wing necrosis observed in white nose syndrome (WNS) in bats. This is Subtilisin-like protease 3 from Pseudogymnoascus destructans (strain ATCC MYA-4855 / 20631-21) (Bat white-nose syndrome fungus).